A 1187-amino-acid chain; its full sequence is Probable histidine kinase 5 (1187 aa).

The Extracellular portion of the chain corresponds to 1–175; sequence MSRVGECGGG…QNNALSFNHG (175 aa). A helical membrane pass occupies residues 176 to 196; the sequence is MIFSLSASLGIVVILVVITIF. Topologically, residues 197-226 are cytoplasmic; it reads KRGKQANELCQHEKLLQTPSVKISRKWSKR. Residues 227-247 form a helical membrane-spanning segment; the sequence is ALLLGVLVGLCSSVWIFSSMH. Over 248-531 the chain is Extracellular; that stretch reads ADVVARRIEN…FKHAPSLPWS (284 aa). Residues 295–519 form the CHASE domain; the sequence is NPSAIDQKTF…GDPTRKHVMH (225 aa). A helical membrane pass occupies residues 532-552; sequence AIMISSAVAIIVLLVGYIIYA. At 553 to 1187 the chain is on the cytoplasmic side; the sequence is TLNSLEEAED…LEADATDPLT (635 aa). The Histidine kinase domain maps to 587–862; sequence TVSHEIRTPM…TFSFTAIFKE (276 aa). The residue at position 590 (H590) is a Phosphohistidine; by autocatalysis. Response regulatory domains lie at 886–1017 and 1041–1178; these read RALV…SKAL and NILV…AHFL. 4-aspartylphosphate occurs at positions 942 and 1091.

In terms of processing, activation probably requires a transfer of a phosphate group between a His in the transmitter domain and an Asp of the receiver domain. In terms of tissue distribution, highly expressed in young leaves and at lower levels in roots, mature leaves, stems and spikelets.

The protein localises to the cell membrane. It catalyses the reaction ATP + protein L-histidine = ADP + protein N-phospho-L-histidine.. Functionally, cytokinin receptor related to bacterial two-component regulators. Functions as a histidine kinase and transmits the stress signal to a downstream MAPK cascade. This Oryza sativa subsp. japonica (Rice) protein is Probable histidine kinase 5.